The primary structure comprises 671 residues: Putative ubiquitin thioesterase 232R (671 aa).

4 disordered regions span residues 36-62, 100-123, 171-203, and 250-319; these read EIID…RRIS, SPKI…PVRQ, NQKP…RPVF, and EPIR…SKRS. The span at 110 to 123 shows a compositional bias: low complexity; that stretch reads PSPVHSPVRSPVRQ. The span at 182–200 shows a compositional bias: pro residues; the sequence is RRSPSPRRSPSPRRSPSPR. Over residues 255 to 271 the composition is skewed to low complexity; that stretch reads SSSSRSSRSTRRSSSTK. Residues 272-319 show a composition bias toward basic residues; it reads PSRRSSSRSRRSSSRSRRSSSRSRRSSSRSRRSSRRSTSRSRSLSKRS. In terms of domain architecture, OTU spans 392-521; sequence FRMINVPLDG…NFHYIALEPF (130 aa). The active site involves Asp400. Residue Cys403 is the Nucleophile of the active site. Residue His514 is part of the active site. The tract at residues 589 to 625 is disordered; sequence KRSLRPSIPPKISTEHRRTPKLRPSVPRPSSIRQSQP.

It carries out the reaction Thiol-dependent hydrolysis of ester, thioester, amide, peptide and isopeptide bonds formed by the C-terminal Gly of ubiquitin (a 76-residue protein attached to proteins as an intracellular targeting signal).. Hydrolase that can remove conjugated ubiquitin from proteins and may therefore play an important regulatory role at the level of protein turnover by preventing degradation. In Acheta domesticus (House cricket), this protein is Putative ubiquitin thioesterase 232R.